The primary structure comprises 180 residues: Shikimate kinase (180 aa).

Residue 19–24 (GAGKTT) coordinates ATP. Thr23 serves as a coordination point for Mg(2+). Positions 41, 65, and 87 each coordinate substrate. Arg125 contributes to the ATP binding site. Residue Arg144 participates in substrate binding.

The protein belongs to the shikimate kinase family. Monomer. It depends on Mg(2+) as a cofactor.

The protein localises to the cytoplasm. It catalyses the reaction shikimate + ATP = 3-phosphoshikimate + ADP + H(+). It functions in the pathway metabolic intermediate biosynthesis; chorismate biosynthesis; chorismate from D-erythrose 4-phosphate and phosphoenolpyruvate: step 5/7. Catalyzes the specific phosphorylation of the 3-hydroxyl group of shikimic acid using ATP as a cosubstrate. This Acinetobacter baylyi (strain ATCC 33305 / BD413 / ADP1) protein is Shikimate kinase.